The primary structure comprises 537 residues: Bifunctional purine biosynthesis protein PurH (537 aa).

The region spanning 8–158 (IPAPDLVPVR…KNHAYVAVVT (151 aa)) is the MGS-like domain.

Belongs to the PurH family.

It carries out the reaction (6R)-10-formyltetrahydrofolate + 5-amino-1-(5-phospho-beta-D-ribosyl)imidazole-4-carboxamide = 5-formamido-1-(5-phospho-D-ribosyl)imidazole-4-carboxamide + (6S)-5,6,7,8-tetrahydrofolate. The catalysed reaction is IMP + H2O = 5-formamido-1-(5-phospho-D-ribosyl)imidazole-4-carboxamide. It participates in purine metabolism; IMP biosynthesis via de novo pathway; 5-formamido-1-(5-phospho-D-ribosyl)imidazole-4-carboxamide from 5-amino-1-(5-phospho-D-ribosyl)imidazole-4-carboxamide (10-formyl THF route): step 1/1. Its pathway is purine metabolism; IMP biosynthesis via de novo pathway; IMP from 5-formamido-1-(5-phospho-D-ribosyl)imidazole-4-carboxamide: step 1/1. The chain is Bifunctional purine biosynthesis protein PurH from Chelativorans sp. (strain BNC1).